The following is a 218-amino-acid chain: Small ribosomal subunit protein uS3c (218 aa).

A KH type-2 domain is found at 47-118 (VQKNIRISSG…KLNIAITRIS (72 aa)).

Belongs to the universal ribosomal protein uS3 family. In terms of assembly, part of the 30S ribosomal subunit.

It localises to the plastid. Its subcellular location is the chloroplast. The polypeptide is Small ribosomal subunit protein uS3c (rps3) (Arabis hirsuta (Hairy rock-cress)).